The sequence spans 142 residues: MRNYDLSPLLRQWIGFDKLASALQTAGESQSFPPYNIEKSDDNHYRITLALAGFRQEDLDIQLEGIRLVVKGTPQQPEKETTWLHQGLVSQAFSLSFTLADNMEVSGATFTNGLLHIDLTRNEPEQIAPQRIAISERPALNS.

The sHSP domain maps to 26-137; that stretch reads AGESQSFPPY…APQRIAISER (112 aa).

It belongs to the small heat shock protein (HSP20) family. As to quaternary structure, homodimer. Forms homomultimers of about 100-150 subunits at optimal growth temperatures. Conformation changes to oligomers at high temperatures or high ionic concentrations. The decrease in size of the multimers is accompanied by an increase in chaperone activity.

Its subcellular location is the cytoplasm. Associates with aggregated proteins, together with IbpA, to stabilize and protect them from irreversible denaturation and extensive proteolysis during heat shock and oxidative stress. Aggregated proteins bound to the IbpAB complex are more efficiently refolded and reactivated by the ATP-dependent chaperone systems ClpB and DnaK/DnaJ/GrpE. Its activity is ATP-independent. The polypeptide is Small heat shock protein IbpB (Klebsiella pneumoniae subsp. pneumoniae (strain ATCC 700721 / MGH 78578)).